We begin with the raw amino-acid sequence, 258 residues long: MAKLAKQLIAKRFVSHLTEYDQYAIAQQQINHQLVDLLQANTDKTFQRALEIGCGTGNLTEKLLAKIPIEHLTLNDFNAIYYPTVLQKIKQKKPLVVVDFMQGDAEQLVFTRNFDLVSAASVVQWFDSPQQFLRNSAYALKPGGVVLFNSFSPLNLQEIRQLTGIGLNYPTRLQWQEWLAQDFEQCQLIEQPIKLTFDSPLAVLIHLKKTGVTAVSNKPWNRHQIKQFCMEYQAHFACEQGVYLTYTPILMLGIKKNG.

Belongs to the methyltransferase superfamily.

It carries out the reaction malonyl-[ACP] + S-adenosyl-L-methionine = malonyl-[ACP] methyl ester + S-adenosyl-L-homocysteine. The protein operates within cofactor biosynthesis; biotin biosynthesis. Functionally, converts the free carboxyl group of a malonyl-thioester to its methyl ester by transfer of a methyl group from S-adenosyl-L-methionine (SAM). It allows to synthesize pimeloyl-ACP via the fatty acid synthetic pathway. This chain is Malonyl-[acyl-carrier protein] O-methyltransferase, found in Haemophilus ducreyi (strain 35000HP / ATCC 700724).